We begin with the raw amino-acid sequence, 316 residues long: NAD kinase 1 (316 aa).

Asp67 functions as the Proton acceptor in the catalytic mechanism. 67–68 (DG) lines the NAD(+) pocket. A disordered region spans residues 132–151 (RSAEERADAPTPLQQPDVED). Residues 160–161 (ND), Arg190, and Asp192 each bind NAD(+).

It belongs to the NAD kinase family. A divalent metal cation is required as a cofactor.

It is found in the cytoplasm. The enzyme catalyses NAD(+) + ATP = ADP + NADP(+) + H(+). In terms of biological role, involved in the regulation of the intracellular balance of NAD and NADP, and is a key enzyme in the biosynthesis of NADP. Catalyzes specifically the phosphorylation on 2'-hydroxyl of the adenosine moiety of NAD to yield NADP. This chain is NAD kinase 1, found in Parasynechococcus marenigrum (strain WH8102).